Reading from the N-terminus, the 177-residue chain is Early nodulin-like protein 15 (177 aa).

Positions 1–24 are cleaved as a signal peptide; the sequence is MASSSLLVTIFLCISVFFFSSVNA. The Phytocyanin domain occupies 25 to 129; that stretch reads NEVTVGGKSG…GQKLRLVVIT (105 aa). An intrachain disulfide couples C83 to C117. N84 carries an N-linked (GlcNAc...) asparagine glycan. S153 carries GPI-anchor amidated serine lipidation. Residues 154-177 constitute a propeptide, removed in mature form; the sequence is GAAKLAGGFSVVFGLVLGLWAFFF.

It belongs to the early nodulin-like (ENODL) family. In terms of tissue distribution, mostly expressed in seedlings, siliques and flowers, and, to a lower extent, in roots, stems and seeds, but barely in leaves.

Its subcellular location is the cell membrane. Functionally, may act as a carbohydrate transporter. Required, together with ENODL11, ENODL12, ENODL13, ENODL14 and ENODL15, for male-female communication and pollen tube reception and burst at the synergid cell surface of the female gametophyte. In Arabidopsis thaliana (Mouse-ear cress), this protein is Early nodulin-like protein 15.